A 612-amino-acid chain; its full sequence is Cytoplasmic dynein 1 intermediate chain 2 (612 aa).

2 stretches are compositionally biased toward basic and acidic residues: residues Met-1–Arg-13 and Gln-20–Ala-43. The interval Met-1–Gln-188 is disordered. At Ser-2 the chain carries N-acetylserine. A Diphosphoserine modification is found at Ser-51. 2 positions are modified to phosphoserine: Ser-51 and Ser-84. A compositionally biased stretch (low complexity) spans Pro-82–Ser-91. Residue Thr-89 is modified to Phosphothreonine. A phosphoserine mark is found at Ser-91, Ser-95, and Ser-98. Basic and acidic residues predominate over residues Glu-164–Gln-188. WD repeat units follow at residues Ser-251–Glu-300, His-304–Val-344, Ala-353–Asp-394, Ser-403–Ser-443, Gly-448–Ser-493, Asp-496–Thr-536, and Glu-542–Arg-581.

This sequence belongs to the dynein intermediate chain family. In terms of assembly, homodimer. The cytoplasmic dynein 1 complex consists of two catalytic heavy chains (HCs) and a number of non-catalytic subunits presented by intermediate chains (ICs), light intermediate chains (LICs) and light chains (LCs); the composition seems to vary in respect to the IC, LIC and LC composition. The heavy chain homodimer serves as a scaffold for the probable homodimeric assembly of the respective non-catalytic subunits. The ICs and LICs bind directly to the HC dimer and the LCs assemble on the IC dimer. Interacts with DYNLT3. Interacts with DYNLT1. Interacts (dephosphorylated at Ser-84) with DCTN1. Interacts with BICD2. Interacts with SPEF2. Interacts with CFAP61. The phosphorylation status of Ser-84 appears to be involved in dynactin-dependent target binding. In terms of processing, pyrophosphorylation by 5-diphosphoinositol pentakisphosphate (5-IP7) promotes interaction with DCTN1. Serine pyrophosphorylation is achieved by Mg(2+)-dependent, but enzyme independent transfer of a beta-phosphate from a inositol pyrophosphate to a pre-phosphorylated serine residue.

Its subcellular location is the cytoplasm. The protein localises to the cytoskeleton. Acts as one of several non-catalytic accessory components of the cytoplasmic dynein 1 complex that are thought to be involved in linking dynein to cargos and to adapter proteins that regulate dynein function. Cytoplasmic dynein 1 acts as a motor for the intracellular retrograde motility of vesicles and organelles along microtubules. The intermediate chains mediate the binding of dynein to dynactin via its 150 kDa component (p150-glued) DCTN1. Involved in membrane-transport, such as Golgi apparatus, late endosomes and lysosomes. The protein is Cytoplasmic dynein 1 intermediate chain 2 (Dync1i2) of Mus musculus (Mouse).